A 508-amino-acid polypeptide reads, in one-letter code: General transcription factor IIF subunit 1 (508 aa).

Position 2 is an N-acetylalanine (Ala2). Thr156 carries the post-translational modification Phosphothreonine. Residues 177–448 form a disordered region; that stretch reads MQQRRLKDQD…SSGDVQVTED (272 aa). Phosphoserine is present on residues Ser217, Ser218, Ser221, and Ser224. Residues 232 to 251 show a composition bias toward basic residues; that stretch reads SKAKKKAPVTKAGRKKKKKK. 2 stretches are compositionally biased toward acidic residues: residues 255-270 and 303-325; these read DEAF…EGQE and EQSE…EEEE. Residue Thr331 is modified to Phosphothreonine. Residues 343–355 are compositionally biased toward acidic residues; the sequence is DDSDSSEESDIDS. The span at 364-374 shows a compositional bias: basic residues; sequence AKKKTPPKRER. A phosphoserine mark is found at Ser377, Ser380, Ser381, and Ser385. The segment covering 378–388 has biased composition (polar residues); the sequence is GGSSKGTSRPG. Thr389 carries the phosphothreonine modification. Low complexity predominate over residues 389–406; sequence TPSAEAASTSSTLRAAAS. Ser391 is subject to Phosphoserine. At Lys407 the chain carries N6-acetyllysine. The segment covering 428–443 has biased composition (polar residues); it reads GPQSLSGKSTPSSGDV. 3 positions are modified to phosphoserine: Ser431, Ser433, and Ser436. The residue at position 437 (Thr437) is a Phosphothreonine. Ser440 bears the Phosphoserine mark.

This sequence belongs to the TFIIF alpha subunit family. Heterodimer of an alpha and a beta subunit. Interacts with GTF2F2, CTDP1, TAF6/TAFII80 and URI1. Interacts with GTF2B (via C-terminus and preferentially via acetylated form); this interaction prevents binding of GTF2B to GTF2F2. Part of TBP-based Pol II pre-initiation complex (PIC), in which Pol II core assembles with general transcription factors and other specific initiation factors including GTF2E1, GTF2E2, GTF2F1, GTF2F2, TCEA1, ERCC2, ERCC3, GTF2H2, GTF2H3, GTF2H4, GTF2H5, GTF2A1, GTF2A2, GTF2B and TBP; this large multi-subunit PIC complex mediates DNA unwinding and targets Pol II core to the transcription start site where the first phosphodiester bond forms. Post-translationally, phosphorylated on Ser and other residues by TAF1 and casein kinase II-like kinases.

The protein resides in the nucleus. Functionally, TFIIF is a general transcription initiation factor that binds to RNA polymerase II and helps to recruit it to the initiation complex in collaboration with TFIIB. It promotes transcription elongation. The protein is General transcription factor IIF subunit 1 (Gtf2f1) of Rattus norvegicus (Rat).